The sequence spans 148 residues: Inner membrane protein YccF (148 aa).

The Periplasmic segment spans residues 1-14; that stretch reads MRTVLNILNFVLGG. A helical membrane pass occupies residues 15 to 37; it reads FATTLGWLLATLVSIVLIFTLPL. The Cytoplasmic segment spans residues 38-76; that stretch reads TRSCWEITKLSLVPYGNEAIHVDELNPAGKNVLLNTGGT. The chain crosses the membrane as a helical span at residues 77-99; that stretch reads VLNIFWLIFFGWWLCLMHIATGI. Residues 100–102 are Periplasmic-facing; the sequence is AQC. The helical transmembrane segment at 103 to 125 threads the bilayer; that stretch reads ISIIGIPVGIANFKIAAIALWPV. The Cytoplasmic portion of the chain corresponds to 126-148; that stretch reads GRRVVSVETAQAAREANARRRFE.

The protein resides in the cell inner membrane. In Escherichia coli (strain K12), this protein is Inner membrane protein YccF (yccF).